The sequence spans 501 residues: Lysine--tRNA ligase (501 aa).

The Mg(2+) site is built by Glu410 and Glu417.

This sequence belongs to the class-II aminoacyl-tRNA synthetase family. Homodimer. Mg(2+) is required as a cofactor.

It localises to the cytoplasm. The enzyme catalyses tRNA(Lys) + L-lysine + ATP = L-lysyl-tRNA(Lys) + AMP + diphosphate. The protein is Lysine--tRNA ligase of Shewanella pealeana (strain ATCC 700345 / ANG-SQ1).